The following is an 897-amino-acid chain: Echinoderm microtubule-associated protein-like 3 (897 aa).

At M1 the chain carries N-acetylmethionine. Positions 16-43 (LQTLSQRLRVQEEEMELVKAALAEALRL) form a coiled coil. Positions 51–68 (TTLQGSGISAPTRNSSIT) are enriched in polar residues. The interval 51 to 210 (TTLQGSGISA…GGPGSRRSNY (160 aa)) is disordered. 3 stretches are compositionally biased toward low complexity: residues 96-108 (PSSGPPGLSNGPP), 118-132 (SGTQSEGGCSSSSGA), and 155-164 (RNSSSSSSPS). Over residues 175 to 190 (AASSANLLLRSGSTES) the composition is skewed to polar residues. Phosphoserine is present on residues S177, S199, and S205. WD repeat units follow at residues 235–287 (RSLE…LYRP), 296–345 (GGGQ…IWDS), 351–393 (LQEI…VWDC), 399–435 (LAEIKSTNDSVLAVGFSPRDSSCIVTSGKSHVHFWNW), 449–488 (RKQGVFGKYKKPKFIPCFVFLPDGDILTGDSEGNILTWGR), 505–544 (YTIVAQAHAHEGSIFALCLRRDGTVLSGGGRDRRLVQWGP), 550–585 (QEAEIPEHFGAVRAIAEGLGSELLVGTTKNALLRGD), 590–627 (FSPVIQGHTDELWGLCTHPSQNRFLTCGHDRQLCLWDG), 630–668 (HALAWSMDLKETGLCADFHPSGAVVVVGLNTGRWLVLDT), 675–710 (SDVTDGNEQLSVVRYSPDGLYLAIGSHDNMIYIYSV), 717–756 (SSRFGRCMGHSSFITHLDWSKDGNFIMSNSGDYEILYWDV), 766–824 (RYES…LFQY), and 831–870 (APSRMYSGHGSHVTSVRFTHDDSYLVSLGGKDASIFQWRV). Residues 876–897 (SGPAPATPSRTPSLSPASSLDV) are disordered. Phosphothreonine; by CDK1 is present on T882. Residues 883–897 (PSRTPSLSPASSLDV) are compositionally biased toward polar residues. S884 carries the phosphoserine modification.

It belongs to the WD repeat EMAP family. In terms of assembly, homotrimer; self-association is mediated by the N-terminal coiled coil. Interacts with EML2 but not with EML1. Interacts (phosphorylated at Thr-882) with TUBG1, HAUS1, HAUS2, HAUS3, HAUS4, HAUS5, HAUS6, HAUS7 and HAUS8. Phosphorylation at Thr-882 during mitosis is required for interaction with TUBG1, HAUS1, HAUS2, HAUS3, HAUS4, HAUS5, HAUS6, HAUS7 and HAUS8 and their recruitment to spindle microtubules.

It localises to the cytoplasm. It is found in the cytoskeleton. The protein resides in the nucleus. The protein localises to the midbody. Its subcellular location is the spindle. In terms of biological role, regulates mitotic spindle assembly, microtubule (MT)-kinetochore attachment and chromosome separation via recruitment of HAUS augmin-like complex and TUBG1 to the existing MTs and promoting MT-based MT nucleation. Required for proper alignnment of chromosomes during metaphase. The polypeptide is Echinoderm microtubule-associated protein-like 3 (Eml3) (Mus musculus (Mouse)).